The following is a 3323-amino-acid chain: Mucin-3A (3323 aa).

A signal peptide spans 1 to 15 (MQLLGLLGLLWMLKA). Disordered stretches follow at residues 218 to 243 (TISS…TSPT), 270 to 289 (TSMT…SSPT), 325 to 345 (ISRS…STVT), 359 to 380 (GTLS…TETA), 539 to 677 (MSAS…PSTE), 700 to 722 (NASS…GTNS), 734 to 756 (ETSS…KTAK), 909 to 991 (SFSS…TLTP), 1170 to 1201 (ISSA…TTPT), 1318 to 1356 (AESA…FPSS), 1380 to 1442 (AMTS…TNPV), 1484 to 1509 (TMTE…ETAK), 1714 to 1746 (TPSS…TPTS), 1793 to 1844 (FTSS…YPTS), and 1900 to 2056 (TSHS…SHST). Residues 270–284 (TSMTTTASQPTATNT) are compositionally biased toward low complexity. Positions 545-563 (GTTHTESISSPPASTSTLH) are enriched in polar residues. Residues 564 to 618 (TTAESTLAPTTTTSFTTSTTMEPPSTTAATTGTGQTTFTSSTATFPETTTPTPTT) are compositionally biased toward low complexity. Residues 619–629 (DMSTESLTTAM) are compositionally biased toward polar residues. Positions 630 to 676 (TSPPITSSVTSTNTVTSMTTTTSPPTTTNSFTSLTSMPLSSTPVPST) are enriched in low complexity. The segment covering 700 to 721 (NASSMTTSETTYPNSPTGPGTN) has biased composition (polar residues). A compositionally biased stretch (low complexity) spans 909 to 918 (SFSSSMSESS). Residues 919–932 (AGTTHTESISSPRG) show a composition bias toward polar residues. The segment covering 933–991 (TTSTLHTTVESTPSPTTTTSFTTSTMMEPPSSTVSTTGRGQTTFPSSTATFPETTTLTP) has biased composition (low complexity). Low complexity predominate over residues 1324–1356 (PTTTTSFTTSPTMEPPSTTVATTGTGQTTFPSS). Tandem repeats lie at residues 1893 to 1910 (VTTT…FTSS), 1911 to 1927 (IATT…FTSS), 1928 to 1944 (ITTT…FTSS), 1945 to 1961 (ITNT…FTSS), 1962 to 1978 (ITTT…LTSS), 1979 to 1995 (ITTT…YTSL), 1996 to 2012 (ITTT…FTSS), 2013 to 2029 (ITTT…LTSS), 2030 to 2046 (ITTT…FTSS), 2047 to 2062 (ITTE…FTSL), 2063 to 2079 (ITIT…YTTS), 2080 to 2096 (ITTT…FTSS), 2097 to 2113 (ITTT…FTSS), 2114 to 2130 (ITTS…FTSS), 2131 to 2147 (ITTT…FTSS), 2148 to 2164 (ITTT…FTSL), 2165 to 2191 (ITTT…FTSS), 2192 to 2208 (NTIT…YITS), 2209 to 2225 (ITTT…FSSS), 2226 to 2242 (ITTT…FTSS), 2243 to 2259 (ITTT…FTSS), 2260 to 2276 (ITTT…FTSS), 2277 to 2293 (ITTS…STSL), 2294 to 2310 (ITTT…FTSS), 2311 to 2327 (ITTT…FTSS), 2328 to 2344 (ITTT…FTSS), 2345 to 2361 (ITTT…FTSS), 2362 to 2378 (ITTT…FSSS), 2379 to 2395 (ITTT…LTSW), 2396 to 2412 (VTTT…LTSS), 2413 to 2429 (ITTT…FTSS), and 2430 to 2446 (ITTT…LSSS). A 32 X approximate tandem repeats, Ser/Thr-rich region spans residues 1893–2446 (VTTTTKITSH…SESTPSLSSS (554 aa)). The segment covering 1907 to 1947 (FTSSIATTETPSHSTPRFTSSITTTETPSHSTPRFTSSITN) has biased composition (polar residues). Low complexity predominate over residues 1948–2056 (TKTTSHSSPS…ITTETTSHST (109 aa)). Composition is skewed to low complexity over residues 2100-2170 (TETT…TTET), 2177-2384 (TTET…TTET), 2393-2447 (TSWV…SSST), and 2464-2507 (TTSE…TTTT). Disordered stretches follow at residues 2100–2447 (TETT…SSST), 2464–2508 (TTSE…TTTD), 2578–2608 (TQTP…DSST), 2631–2656 (IPST…TSTS), 2834–2858 (MMPE…VPTN), and 2897–2937 (SSLP…TSRR). Residues 2578–2602 (TQTPPVLTSATGTQTSPAPTTVTFG) show a composition bias toward polar residues. Composition is skewed to low complexity over residues 2633-2656 (STHS…TSTS), 2834-2849 (MMPE…ASSS), and 2905-2937 (TSSK…TSRR). Residues 2976–3009 (SGDRCQLQTRCQNGGQWDGLKCQCPSTFYGSSCE) enclose the EGF-like domain. Disulfide bonds link cysteine 2980-cysteine 2986 and cysteine 2999-cysteine 3008. In terms of domain architecture, SEA spans 3018 to 3143 (DVVETEVGME…DSIKVNNNSK (126 aa)). Residues 3227-3247 (LVGGLTAGAALLVLLLLALGV) traverse the membrane as a helical segment.

In terms of processing, highly O-glycosylated and probably also N-glycosylated. In terms of tissue distribution, broad specificity; small intestine, colon, colonic tumors, heart, liver, thymus, prostate, pancreas and gall bladder.

The protein localises to the membrane. Its subcellular location is the secreted. Major glycoprotein component of a variety of mucus gels. Thought to provide a protective, lubricating barrier against particles and infectious agents at mucosal surfaces. May be involved in ligand binding and intracellular signaling. The protein is Mucin-3A of Homo sapiens (Human).